The sequence spans 178 residues: Ribulose bisphosphate carboxylase small subunit, chloroplastic 2 (178 aa).

The N-terminal 54 residues, 1–54, are a transit peptide targeting the chloroplast; sequence MASISSTVATVSRAAPAQANMVAPFTGLKSNVAFPATKKANDFSTLPSNGGRVQ.

The protein belongs to the RuBisCO small chain family. As to quaternary structure, heterohexadecamer of 8 large and 8 small subunits.

Its subcellular location is the plastid. The protein localises to the chloroplast. Functionally, ruBisCO catalyzes two reactions: the carboxylation of D-ribulose 1,5-bisphosphate, the primary event in carbon dioxide fixation, as well as the oxidative fragmentation of the pentose substrate. Both reactions occur simultaneously and in competition at the same active site. Although the small subunit is not catalytic it is essential for maximal activity. The chain is Ribulose bisphosphate carboxylase small subunit, chloroplastic 2 from Flaveria pringlei.